Reading from the N-terminus, the 325-residue chain is LIM and senescent cell antigen-like-containing domain protein 1 (325 aa).

At A2 the chain carries N-acetylalanine. LIM zinc-binding domains are found at residues 10–62 (CERC…CEHD), 71–121 (CHQC…CRPC), 135–184 (CQKC…CLPC), 193–243 (CGAC…CETH), and 252–303 (CFHC…CKKC).

In terms of assembly, component of the heterotrimeric IPP (ILK-PINCH-PARVIN) complex composed of ILK, LIMS1/PINCH and PARVA; the complex binds to F-actin via the C-terminal tail of LIMS1 and the N-terminal region of PARVA, promoting F-actin filament bundling. Formation of the IPP complex is dependent on protein kinase C and precedes integrin-mediated cell adhesion and spreading. Competes with LIMS2 for interaction with ILK. Interacts (via LIM zinc-binding 5) with TGFB1I1. Interacts with SH3/SH2 adapter NCK2, thereby linking the complex to cell surface receptors. Expressed in most tissues except in the brain.

The protein resides in the cell junction. Its subcellular location is the focal adhesion. It is found in the cell membrane. Functionally, within the IPP (ILK-PINCH-PARVIN) complex, binds to F-actin, promoting F-actin bundling, a process required to generate force for actin cytoskeleton reorganization and subsequent dynamic cell adhesion events such as cell spreading and migration. This Homo sapiens (Human) protein is LIM and senescent cell antigen-like-containing domain protein 1 (LIMS1).